We begin with the raw amino-acid sequence, 737 residues long: Alpha-adducin (737 aa).

Met1 carries the N-acetylmethionine modification. Residues 1-21 form a disordered region; sequence MNGDSRAAVVTSPPPTTAPHK. Residue Ser12 is modified to Phosphoserine. At Ser59 the chain carries Phosphoserine; by PKA. Ser64 carries the phosphoserine modification. Phosphothreonine is present on Thr331. Ser334, Ser353, Ser355, Ser358, and Ser366 each carry phosphoserine. Ser408 carries the phosphoserine; by PKA modification. Disordered regions lie at residues 421–486 and 576–737; these read FASD…SAVP and RREV…KSDS. Ser427 is modified (phosphoserine). Position 429 is a phosphothreonine (Thr429). Residue Ser431 is modified to Phosphoserine. Ser436 is modified (phosphoserine; by PKA). Thr445 is modified (phosphothreonine; by ROCK2). A phosphoserine mark is found at Ser464 and Ser465. Residue Thr480 is modified to Phosphothreonine; by ROCK2. At Ser481 the chain carries Phosphoserine; by PKA. Residues 576 to 601 are compositionally biased toward basic and acidic residues; it reads RREVERKQKGSEENLDEAREQKEKSP. Ser586, Ser600, and Ser613 each carry phosphoserine. Positions 602-614 are enriched in pro residues; it reads PDQPAVPHPPPST. Thr614 is modified (phosphothreonine). Phosphoserine is present on residues Ser678, Ser707, Ser710, and Ser714. Low complexity predominate over residues 687–714; sequence PVAEEAAPSAVEEGAAADPGSDGSPGKS. The span at 715–737 shows a compositional bias: basic residues; it reads PSKKKKKFRTPSFLKKSKKKSDS. Position 716 is a phosphoserine; by PKC (Ser716). The tract at residues 717 to 734 is interaction with calmodulin; it reads KKKKKFRTPSFLKKSKKK. Ser726 carries the post-translational modification Phosphoserine; by PKA and PKC.

It belongs to the aldolase class II family. Adducin subfamily. As to quaternary structure, heterodimer of an alpha and a beta subunit or an alpha and a gamma subunit. As to expression, expressed in all tissues. Found in much higher levels in reticulocytes than the beta subunit.

Its subcellular location is the cytoplasm. It localises to the cytoskeleton. It is found in the cell membrane. Functionally, membrane-cytoskeleton-associated protein that promotes the assembly of the spectrin-actin network. Binds to calmodulin. This is Alpha-adducin (ADD1) from Homo sapiens (Human).